Consider the following 370-residue polypeptide: Endopolygalacturonase A (370 aa).

A signal peptide spans 1 to 19 (MPSAKPLFCLATLAGAALA). A propeptide spanning residues 20–32 (APAPSRATDFNKR) is cleaved from the precursor. Cys-35 and Cys-50 form a disulfide bridge. 6 PbH1 repeats span residues 162-192 (SDNLVIEDVTIDNSDGDSEGGHNTDGFDISE), 193-214 (STYITITGATVKNQGDCVAINS), 215-235 (GENIYFSGGTCSGGHGLSIGS), 244-265 (VKNVTFIDSTVSDSENGVRIKT), 273-295 (VEDITYSNIQLSGISDYGIVIEQ), and 307-352 (SNGV…DITG). Cys-209 and Cys-225 form a disulfide bridge. The active site involves His-229. Residue Asn-246 is glycosylated (N-linked (GlcNAc...) asparagine). 2 disulfides stabilise this stretch: Cys-335-Cys-340 and Cys-359-Cys-368.

It belongs to the glycosyl hydrolase 28 family.

It is found in the secreted. The enzyme catalyses (1,4-alpha-D-galacturonosyl)n+m + H2O = (1,4-alpha-D-galacturonosyl)n + (1,4-alpha-D-galacturonosyl)m.. Functionally, involved in maceration and soft-rotting of plant tissue. Hydrolyzes the 1,4-alpha glycosidic bonds of de-esterified pectate in the smooth region of the plant cell wall. The polypeptide is Endopolygalacturonase A (pgaA) (Aspergillus awamori (Black koji mold)).